A 532-amino-acid chain; its full sequence is Exodeoxyribonuclease 7 large subunit (532 aa).

Residues 497–532 are disordered; it reads AITTGEGTPAPETAAAPKKKPAKPASSDPGNQGNLF. Over residues 499-512 the composition is skewed to low complexity; sequence TTGEGTPAPETAAA.

It belongs to the XseA family. As to quaternary structure, heterooligomer composed of large and small subunits.

The protein resides in the cytoplasm. The enzyme catalyses Exonucleolytic cleavage in either 5'- to 3'- or 3'- to 5'-direction to yield nucleoside 5'-phosphates.. Functionally, bidirectionally degrades single-stranded DNA into large acid-insoluble oligonucleotides, which are then degraded further into small acid-soluble oligonucleotides. The sequence is that of Exodeoxyribonuclease 7 large subunit from Agrobacterium fabrum (strain C58 / ATCC 33970) (Agrobacterium tumefaciens (strain C58)).